A 356-amino-acid chain; its full sequence is Fructose-1,6-bisphosphatase class 1 1 (356 aa).

Positions 106, 129, 131, and 132 each coordinate Mg(2+). Substrate is bound by residues 132 to 135, N225, Y258, and K288; that span reads DGSS. E294 contacts Mg(2+).

It belongs to the FBPase class 1 family. In terms of assembly, homotetramer. It depends on Mg(2+) as a cofactor.

The protein localises to the cytoplasm. The enzyme catalyses beta-D-fructose 1,6-bisphosphate + H2O = beta-D-fructose 6-phosphate + phosphate. The protein operates within carbohydrate biosynthesis; gluconeogenesis. The protein is Fructose-1,6-bisphosphatase class 1 1 of Salinibacter ruber (strain DSM 13855 / M31).